We begin with the raw amino-acid sequence, 392 residues long: Lipase (392 aa).

Residues 1 to 26 (MVSFISISQGVSLCLLVSSMMLGSSA) form the signal peptide. Residues 27 to 95 (VPVSGKSGSS…GGNLTSIGKR (69 aa)) constitute a propeptide that is removed on maturation. The interval 50–69 (PLISSRCAPPSNKGSKSDLQ) is disordered. 3 disulfides stabilise this stretch: C152-C391, C163-C166, and C358-C367. The Nucleophile role is filled by S268. The active-site Charge relay system is D327. D379 contributes to the Ca(2+) binding site. H380 serves as the catalytic Charge relay system.

It belongs to the AB hydrolase superfamily. Lipase family.

The protein resides in the secreted. It localises to the extracellular space. The catalysed reaction is a triacylglycerol + H2O = a diacylglycerol + a fatty acid + H(+). Lipase activity is maximal at a lipid-water interface (interfacial activation), probably by an induced conformational change that results in an increased accessibility of the active site to the substrate. Its function is as follows. Hydrolyzes ester bonds of triglycerides as well as of their derived partial glycerides with a strong 1,3-positional specificity. The chain is Lipase from Rhizopus niveus.